The chain runs to 1028 residues: MYFRVLLTPSSAMFDSFSFVRRLSYSPDLGRRIYGHVLPSHDQIHQRLLEICLGQCKLFKSRKVFDEMPQRLALALRIGKAVHSKSLILGIDSEGRLGNAIVDLYAKCAQVSYAEKQFDFLEKDVTAWNSMLSMYSSIGKPGKVLRSFVSLFENQIFPNKFTFSIVLSTCARETNVEFGRQIHCSMIKMGLERNSYCGGALVDMYAKCDRISDARRVFEWIVDPNTVCWTCLFSGYVKAGLPEEAVLVFERMRDEGHRPDHLAFVTVINTYIRLGKLKDARLLFGEMSSPDVVAWNVMISGHGKRGCETVAIEYFFNMRKSSVKSTRSTLGSVLSAIGIVANLDLGLVVHAEAIKLGLASNIYVGSSLVSMYSKCEKMEAAAKVFEALEEKNDVFWNAMIRGYAHNGESHKVMELFMDMKSSGYNIDDFTFTSLLSTCAASHDLEMGSQFHSIIIKKKLAKNLFVGNALVDMYAKCGALEDARQIFERMCDRDNVTWNTIIGSYVQDENESEAFDLFKRMNLCGIVSDGACLASTLKACTHVHGLYQGKQVHCLSVKCGLDRDLHTGSSLIDMYSKCGIIKDARKVFSSLPEWSVVSMNALIAGYSQNNLEEAVVLFQEMLTRGVNPSEITFATIVEACHKPESLTLGTQFHGQITKRGFSSEGEYLGISLLGMYMNSRGMTEACALFSELSSPKSIVLWTGMMSGHSQNGFYEEALKFYKEMRHDGVLPDQATFVTVLRVCSVLSSLREGRAIHSLIFHLAHDLDELTSNTLIDMYAKCGDMKGSSQVFDEMRRRSNVVSWNSLINGYAKNGYAEDALKIFDSMRQSHIMPDEITFLGVLTACSHAGKVSDGRKIFEMMIGQYGIEARVDHVACMVDLLGRWGYLQEADDFIEAQNLKPDARLWSSLLGACRIHGDDIRGEISAEKLIELEPQNSSAYVLLSNIYASQGCWEKANALRKVMRDRGVKKVPGYSWIDVEQRTHIFAAGDKSHSEIGKIEMFLEDLYDLMKDDAVVNPDIVEQGSLDCV.

Residues 1-30 (MYFRVLLTPSSAMFDSFSFVRRLSYSPDLG) constitute a mitochondrion transit peptide. 24 PPR repeats span residues 94–123 (EGRLGNAIVDLYAKCAQVSYAEKQFDFLEK), 124–158 (DVTAWNSMLSMYSSIGKPGKVLRSFVSLFENQIFP), 159–193 (NKFTFSIVLSTCARETNVEFGRQIHCSMIKMGLER), 194–224 (NSYCGGALVDMYAKCDRISDARRVFEWIVDP), 225–259 (NTVCWTCLFSGYVKAGLPEEAVLVFERMRDEGHRP), 260–290 (DHLAFVTVINTYIRLGKLKDARLLFGEMSSP), 291–325 (DVVAWNVMISGHGKRGCETVAIEYFFNMRKSSVKS), 326–360 (TRSTLGSVLSAIGIVANLDLGLVVHAEAIKLGLAS), 361–391 (NIYVGSSLVSMYSKCEKMEAAAKVFEALEEK), 392–426 (NDVFWNAMIRGYAHNGESHKVMELFMDMKSSGYNI), 427–461 (DDFTFTSLLSTCAASHDLEMGSQFHSIIIKKKLAK), 462–492 (NLFVGNALVDMYAKCGALEDARQIFERMCDR), 493–527 (DNVTWNTIIGSYVQDENESEAFDLFKRMNLCGIVS), 528–562 (DGACLASTLKACTHVHGLYQGKQVHCLSVKCGLDR), 563–593 (DLHTGSSLIDMYSKCGIIKDARKVFSSLPEW), 594–627 (SVVSMNALIAGYSQNNLEEAVVLFQEMLTRGVNP), 628–662 (SEITFATIVEACHKPESLTLGTQFHGQITKRGFSS), 664–694 (GEYLGISLLGMYMNSRGMTEACALFSELSSP), 696–730 (SIVLWTGMMSGHSQNGFYEEALKFYKEMRHDGVLP), 731–765 (DQATFVTVLRVCSVLSSLREGRAIHSLIFHLAHDL), 766–796 (DELTSNTLIDMYAKCGDMKGSSQVFDEMRRR), 798–832 (NVVSWNSLINGYAKNGYAEDALKIFDSMRQSHIMP), 833–863 (DEITFLGVLTACSHAGKVSDGRKIFEMMIGQ), and 869–899 (RVDHVACMVDLLGRWGYLQEADDFIEAQNLK). The segment at 904 to 979 (LWSSLLGACR…VPGYSWIDVE (76 aa)) is type E motif. The interval 980–1010 (QRTHIFAAGDKSHSEIGKIEMFLEDLYDLMK) is type E(+) motif.

Belongs to the PPR family. PCMP-E subfamily.

The protein localises to the mitochondrion. This chain is Pentatricopeptide repeat-containing protein At3g09040, mitochondrial (PCMP-E88), found in Arabidopsis thaliana (Mouse-ear cress).